The sequence spans 640 residues: 1-deoxy-D-xylulose-5-phosphate synthase (640 aa).

Thiamine diphosphate contacts are provided by residues His-79 and 120–122 (GHS). Asp-151 provides a ligand contact to Mg(2+). Residues 152–153 (GG), Asn-180, Tyr-288, and Glu-372 contribute to the thiamine diphosphate site. Residue Asn-180 coordinates Mg(2+).

The protein belongs to the transketolase family. DXPS subfamily. Homodimer. Mg(2+) is required as a cofactor. It depends on thiamine diphosphate as a cofactor.

The catalysed reaction is D-glyceraldehyde 3-phosphate + pyruvate + H(+) = 1-deoxy-D-xylulose 5-phosphate + CO2. Its pathway is metabolic intermediate biosynthesis; 1-deoxy-D-xylulose 5-phosphate biosynthesis; 1-deoxy-D-xylulose 5-phosphate from D-glyceraldehyde 3-phosphate and pyruvate: step 1/1. Catalyzes the acyloin condensation reaction between C atoms 2 and 3 of pyruvate and glyceraldehyde 3-phosphate to yield 1-deoxy-D-xylulose-5-phosphate (DXP). The chain is 1-deoxy-D-xylulose-5-phosphate synthase from Nitrosococcus oceani (strain ATCC 19707 / BCRC 17464 / JCM 30415 / NCIMB 11848 / C-107).